Consider the following 709-residue polypeptide: Polyribonucleotide nucleotidyltransferase (709 aa).

Mg(2+)-binding residues include Asp-489 and Asp-495. The KH domain occupies 556-615 (PKIDMIKIDVDKIKVVIGKGGETIDKIIAETGVKIDIDEEGNVSIFSSDQAAIDRTKDII). Residues 625-693 (GEVYHAKVVR…DKGRVDASMK (69 aa)) form the S1 motif domain.

Belongs to the polyribonucleotide nucleotidyltransferase family. Requires Mg(2+) as cofactor.

Its subcellular location is the cytoplasm. The enzyme catalyses RNA(n+1) + phosphate = RNA(n) + a ribonucleoside 5'-diphosphate. Its function is as follows. Involved in mRNA degradation. Catalyzes the phosphorolysis of single-stranded polyribonucleotides processively in the 3'- to 5'-direction. The protein is Polyribonucleotide nucleotidyltransferase of Streptococcus agalactiae serotype Ia (strain ATCC 27591 / A909 / CDC SS700).